Here is a 301-residue protein sequence, read N- to C-terminus: Porphobilinogen deaminase (301 aa).

The residue at position 242 (Cys-242) is an S-(dipyrrolylmethanemethyl)cysteine.

It belongs to the HMBS family. Monomer. Dipyrromethane serves as cofactor.

It carries out the reaction 4 porphobilinogen + H2O = hydroxymethylbilane + 4 NH4(+). It participates in porphyrin-containing compound metabolism; protoporphyrin-IX biosynthesis; coproporphyrinogen-III from 5-aminolevulinate: step 2/4. Its function is as follows. Tetrapolymerization of the monopyrrole PBG into the hydroxymethylbilane pre-uroporphyrinogen in several discrete steps. This chain is Porphobilinogen deaminase, found in Rickettsia akari (strain Hartford).